The primary structure comprises 138 residues: MAGSVYNLPSQNPNPQSLFQIFVDRVPLSNLPATSDDSSRTAEDNERKRRRKVSNRESARRSRMRKQRHMEELWSMLVQLINKNKSLVDELSQARECYEKVIEENMKLREENSKSRKMIGEIGLNRFLSVEADQIWTF.

The segment at 30–67 (NLPATSDDSSRTAEDNERKRRRKVSNRESARRSRMRKQ) is disordered. Basic and acidic residues predominate over residues 37–47 (DSSRTAEDNER). Residues 45-108 (NERKRRRKVS…EKVIEENMKL (64 aa)) enclose the bZIP domain. Positions 47–68 (RKRRRKVSNRESARRSRMRKQR) are basic motif. Positions 48–55 (KRRRKVSN) match the Nuclear localization signal motif. The interval 73-87 (LWSMLVQLINKNKSL) is leucine-zipper.

This sequence belongs to the bZIP family. Homodimer.

It localises to the nucleus. This Arabidopsis thaliana (Mouse-ear cress) protein is Basic leucine zipper 8.